We begin with the raw amino-acid sequence, 367 residues long: Indole glucosinolate O-methyltransferase 5 (367 aa).

Residues G209, D232, D252, M253, and K266 each contribute to the S-adenosyl-L-homocysteine site. H270 (proton acceptor) is an active-site residue.

It belongs to the class I-like SAM-binding methyltransferase superfamily. Cation-independent O-methyltransferase family.

Its pathway is secondary metabolite biosynthesis. In terms of biological role, involved in indole glucosinolate biosynthesis. Catalyzes methoxylation reactions of the glucosinolate indole ring. Converts the hydroxy intermediates 4-hydroxy-indol-3-yl-methylglucosinolate (4OH-I3M) and 1-hydroxy-indol-3-yl-methylglucosinolate (1OH-I3M) to 4-methoxy-indol-3-yl-methylglucosinolate (4MO-I3M) and 1-methoxy-indol-3-yl-methylglucosinolate, respectively. In Arabidopsis thaliana (Mouse-ear cress), this protein is Indole glucosinolate O-methyltransferase 5.